Reading from the N-terminus, the 144-residue chain is uncharacterized protein (144 aa).

Residues 72-90 (VAIGTSLIVGAGVAMEVSV) traverse the membrane as a helical segment.

To yeast YCL21w.

Its subcellular location is the membrane. This is an uncharacterized protein from Saccharomyces cerevisiae (strain ATCC 204508 / S288c) (Baker's yeast).